We begin with the raw amino-acid sequence, 313 residues long: Methionyl-tRNA formyltransferase (313 aa).

113 to 116 is a binding site for (6S)-5,6,7,8-tetrahydrofolate; sequence SLLP.

Belongs to the Fmt family.

The catalysed reaction is L-methionyl-tRNA(fMet) + (6R)-10-formyltetrahydrofolate = N-formyl-L-methionyl-tRNA(fMet) + (6S)-5,6,7,8-tetrahydrofolate + H(+). Functionally, attaches a formyl group to the free amino group of methionyl-tRNA(fMet). The formyl group appears to play a dual role in the initiator identity of N-formylmethionyl-tRNA by promoting its recognition by IF2 and preventing the misappropriation of this tRNA by the elongation apparatus. The chain is Methionyl-tRNA formyltransferase from Francisella tularensis subsp. holarctica (strain FTNF002-00 / FTA).